The chain runs to 337 residues: tRNA N6-adenosine threonylcarbamoyltransferase (337 aa).

The Fe cation site is built by H111 and H115. Substrate-binding positions include 134-138 (LVSGG), D167, G180, and N272. D300 contributes to the Fe cation binding site.

Belongs to the KAE1 / TsaD family. Fe(2+) is required as a cofactor.

It is found in the cytoplasm. The catalysed reaction is L-threonylcarbamoyladenylate + adenosine(37) in tRNA = N(6)-L-threonylcarbamoyladenosine(37) in tRNA + AMP + H(+). Its function is as follows. Required for the formation of a threonylcarbamoyl group on adenosine at position 37 (t(6)A37) in tRNAs that read codons beginning with adenine. Is involved in the transfer of the threonylcarbamoyl moiety of threonylcarbamoyl-AMP (TC-AMP) to the N6 group of A37, together with TsaE and TsaB. TsaD likely plays a direct catalytic role in this reaction. The sequence is that of tRNA N6-adenosine threonylcarbamoyltransferase from Escherichia coli O45:K1 (strain S88 / ExPEC).